Consider the following 347-residue polypeptide: Fatty acid elongase 2 (347 aa).

The Lumenal segment spans residues 1–62 (MNSLVTQYAA…PSEFQFIAGE (62 aa)). N-linked (GlcNAc...) asparagine glycosylation occurs at Asn-32. A helical transmembrane segment spans residues 63-83 (LPLSTLPPVLYAITAYYVIIF). Residues 84–96 (GGRFLLSKSKPFK) lie on the Cytoplasmic side of the membrane. The chain crosses the membrane as a helical span at residues 97–119 (LNGLFQLHNLVLTSLSLTLLLLM). The Lumenal portion of the chain corresponds to 120–122 (VEQ). Residues 123-142 (LVPIIVQHGLYFAICNIGAW) traverse the membrane as a helical segment. The Cytoplasmic portion of the chain corresponds to 143 to 146 (TQPL). A helical transmembrane segment spans residues 147–169 (VTLYYMNYIVKFIEFIDTFFLVL). The Lumenal segment spans residues 170-200 (KHKKLTFLHTYHHGATALLCYTQLMGTTSIS). Positions 178-182 (HTYHH) match the HxxHH motif motif. The chain crosses the membrane as a helical span at residues 201 to 221 (WVPISLNLGVHVVMYWYYFLA). At 222–231 (ARGIRVWWKE) the chain is on the cytoplasmic side. A helical membrane pass occupies residues 232–254 (WVTRFQIIQFVLDIGFIYFAVYQ). The Lumenal portion of the chain corresponds to 255 to 275 (KAVHLYFPILPHCGDCVGSTT). The helical transmembrane segment at 276–296 (ATFAGCAIISSYLVLFISFYI) threads the bilayer. The Cytoplasmic portion of the chain corresponds to 297 to 347 (NVYKRKGTKTSRVVKRAHGGVAAKVNEYVNVDLKNVPTPSPSPKPQHRRKR). Residue Thr-334 is modified to Phosphothreonine. Phosphoserine is present on residues Ser-336 and Ser-338. Residues 344-347 (RRKR) carry the Di-lysine-like motif motif.

It belongs to the ELO family.

It localises to the endoplasmic reticulum membrane. The enzyme catalyses a very-long-chain acyl-CoA + malonyl-CoA + H(+) = a very-long-chain 3-oxoacyl-CoA + CO2 + CoA. It carries out the reaction octadecanoyl-CoA + malonyl-CoA + H(+) = 3-oxoeicosanoyl-CoA + CO2 + CoA. The catalysed reaction is hexadecanoyl-CoA + malonyl-CoA + H(+) = 3-oxooctadecanoyl-CoA + CO2 + CoA. It catalyses the reaction eicosanoyl-CoA + malonyl-CoA + H(+) = 3-oxodocosanoyl-CoA + CO2 + CoA. The enzyme catalyses docosanoyl-CoA + malonyl-CoA + H(+) = 3-oxotetracosanoyl-CoA + CO2 + CoA. Functionally, component of a microsomal membrane-bound long-chain fatty acid elongation system, which produces the 20-26-carbon very long-chain fatty acids (VLCFA) from long-chain fatty acid precursors and is involved ceramide and inositol sphingolipid biosynthesis. Component of elongase II, which elongates 16-18 carbon fatty acyl-CoAs such as palmitoyl-CoA and stearoyl-CoA to 20-22-carbon fatty acids by incorporation of malonyl-CoA. Involved in the synthesis of 1,3-beta-glucan. The enzymes active site faces the cytosol, whereas VLCFA length is determined by a lysine near the luminal end of transmembrane helix 6. Plays an important role in lipotoxic cell death induced by oleic acid through maintaining a balanced fatty acid composition in thr plasma membrane. In Saccharomyces cerevisiae (strain ATCC 204508 / S288c) (Baker's yeast), this protein is Fatty acid elongase 2.